A 715-amino-acid polypeptide reads, in one-letter code: Lanosterol synthase erg7B (715 aa).

The stretch at 111–153 is one PFTB 1 repeat; that stretch reads AIEIKNYLMARANPVDGGWGLHSEGDSSVFGTSLNYTVLRLLG. Catalysis depends on D445, which acts as the Proton donor. 2 PFTB repeats span residues 550–590 and 599–640; these read IQRG…RSAG and VRRG…VVQT.

The protein belongs to the terpene cyclase/mutase family.

It is found in the lipid droplet. The protein resides in the endoplasmic reticulum membrane. The enzyme catalyses (S)-2,3-epoxysqualene = lanosterol. It functions in the pathway steroid metabolism; ergosterol biosynthesis. In terms of biological role, lanosterol synthase; part of the third module of ergosterol biosynthesis pathway that includes the late steps of the pathway. ERG7A and ERG7B catalyze the cyclization of (S)-2,3 oxidosqualene to lanosterol, a reaction that forms the sterol core. The third module or late pathway involves the ergosterol synthesis itself through consecutive reactions that mainly occur in the endoplasmic reticulum (ER) membrane. Firstly, the squalene synthase erg9 catalyzes the condensation of 2 farnesyl pyrophosphate moieties to form squalene, which is the precursor of all steroids. Squalene synthase is crucial for balancing the incorporation of farnesyl diphosphate (FPP) into sterol and nonsterol isoprene synthesis. Secondly, squalene is converted into lanosterol by the consecutive action of the squalene epoxidase erg1 and the lanosterol synthase erg7. Then, the delta(24)-sterol C-methyltransferase erg6 methylates lanosterol at C-24 to produce eburicol. Eburicol is the substrate of the sterol 14-alpha demethylase encoded by cyp51A and cyp51B, to yield 4,4,24-trimethyl ergosta-8,14,24(28)-trienol. The C-14 reductase erg24 then reduces the C14=C15 double bond which leads to 4,4-dimethylfecosterol. A sequence of further demethylations at C-4, involving the C-4 demethylation complex containing the C-4 methylsterol oxidases erg25A or erg25B, the sterol-4-alpha-carboxylate 3-dehydrogenase erg26 and the 3-keto-steroid reductase erg27, leads to the production of fecosterol via 4-methylfecosterol. The C-8 sterol isomerase erg2 then catalyzes the reaction which results in unsaturation at C-7 in the B ring of sterols and thus converts fecosterol to episterol. The sterol-C5-desaturase erg3B then catalyzes the introduction of a C-5 double bond in the B ring to produce 5-dehydroepisterol. The 2 other sterol-C5-desaturases, erg3A and erg3C, seem to be less important in ergosterol biosynthesis. The C-22 sterol desaturase erg5 further converts 5-dehydroepisterol into ergosta-5,7,22,24(28)-tetraen-3beta-ol by forming the C-22(23) double bond in the sterol side chain. Finally, ergosta-5,7,22,24(28)-tetraen-3beta-ol is substrate of the C-24(28) sterol reductases erg4A and erg4B to produce ergosterol. Possible alternative sterol biosynthetic pathways might exist from fecosterol to ergosterol, depending on the activities of the erg3 isoforms. This chain is Lanosterol synthase erg7B, found in Aspergillus fumigatus (strain ATCC MYA-4609 / CBS 101355 / FGSC A1100 / Af293) (Neosartorya fumigata).